The following is a 248-amino-acid chain: UPF0736 protein BCE33L1074 (248 aa).

This sequence belongs to the UPF0736 family.

The polypeptide is UPF0736 protein BCE33L1074 (Bacillus cereus (strain ZK / E33L)).